Here is a 662-residue protein sequence, read N- to C-terminus: A-kinase anchor protein 10, mitochondrial (662 aa).

The transit peptide at 1–28 directs the protein to the mitochondrion; sequence MRGAGPSPRQSPRTLRPDPGPAMSFFRR. Positions 1–55 are disordered; sequence MRGAGPSPRQSPRTLRPDPGPAMSFFRRKVKGKEQEKTSDVKSIKASISVHSPQK. Residues 32-43 show a composition bias toward basic and acidic residues; that stretch reads GKEQEKTSDVKS. Residues Ser-52 and Ser-189 each carry the phosphoserine modification. RGS domains lie at 125 to 369 and 379 to 505; these read TLEQ…CKYQ and YLAD…YKYL. Positions 261–280 are enriched in polar residues; that stretch reads SMETQESSSTLTVASRNSPA. The tract at residues 261–282 is disordered; sequence SMETQESSSTLTVASRNSPASP. Ser-281 is modified (phosphoserine). Residues 524-548 form a disordered region; the sequence is LTAPGSVGPPDESHPGSSDSSASQS. Residues 634–647 form a PKA-RII subunit binding region; sequence LAWKIAKMIVSDIM.

The protein localises to the mitochondrion. It localises to the membrane. It is found in the cytoplasm. Functionally, differentially targeted protein that binds to type I and II regulatory subunits of protein kinase A and anchors them to the mitochondria or the plasma membrane. Although the physiological relevance between PKA and AKAPS with mitochondria is not fully understood, one idea is that BAD, a proapoptotic member, is phosphorylated and inactivated by mitochondria-anchored PKA. It cannot be excluded too that it may facilitate PKA as well as G protein signal transduction, by acting as an adapter for assembling multiprotein complexes. With its RGS domain, it could lead to the interaction to G-alpha proteins, providing a link between the signaling machinery and the downstream kinase. The sequence is that of A-kinase anchor protein 10, mitochondrial (AKAP10) from Homo sapiens (Human).